A 353-amino-acid chain; its full sequence is Spermidine/putrescine import ATP-binding protein PotA (353 aa).

One can recognise an ABC transporter domain in the interval 7-237; that stretch reads IRFERVTKEY…PINRFVADFI (231 aa). 39–46 is an ATP binding site; the sequence is GPSGCGKT.

Belongs to the ABC transporter superfamily. Spermidine/putrescine importer (TC 3.A.1.11.1) family. As to quaternary structure, the complex is composed of two ATP-binding proteins (PotA), two transmembrane proteins (PotB and PotC) and a solute-binding protein (PotD).

It is found in the cell membrane. It carries out the reaction ATP + H2O + polyamine-[polyamine-binding protein]Side 1 = ADP + phosphate + polyamineSide 2 + [polyamine-binding protein]Side 1.. Its function is as follows. Part of the ABC transporter complex PotABCD involved in spermidine/putrescine import. Responsible for energy coupling to the transport system. In Geobacillus kaustophilus (strain HTA426), this protein is Spermidine/putrescine import ATP-binding protein PotA.